The chain runs to 322 residues: MVKLAITLGDPSGINSEILLKALNKLPKRNISYVIYGSKKALEKAKKLTGVDLNIKEIKSINDVVKSGIYLINLYDLDVEFGSSSKETGKASVVYLENAVKDVLEKKADALITLPISKQWIMESGFPYAGHTDYLAEVSGAKEYAMVLMCKKLKVALITTHIPLKDVPSQITKEKIISKVRLINREFKEKFGISKPKIAILGLNPHASDNGNIGNEEQNIILPAVKTLREDGIEITDPLSPDTAFNRYKDFDIYVAMYHDQGLIPLKLLCFRKAVNITLGLPFIRTSPDHGTGYDIAGKNIADPSSTIEAVELAILLKRVRK.

Substrate-binding residues include His-131 and Thr-132. The a divalent metal cation site is built by His-161, His-206, and His-259. Substrate contacts are provided by Lys-267, Asn-276, and Arg-285.

This sequence belongs to the PdxA family. Homodimer. It depends on a divalent metal cation as a cofactor.

It is found in the cytoplasm. It carries out the reaction 4-(phosphooxy)-L-threonine + NAD(+) = 3-amino-2-oxopropyl phosphate + CO2 + NADH. Its pathway is cofactor biosynthesis; pyridoxine 5'-phosphate biosynthesis; pyridoxine 5'-phosphate from D-erythrose 4-phosphate: step 4/5. In terms of biological role, catalyzes the NAD(P)-dependent oxidation of 4-(phosphooxy)-L-threonine (HTP) into 2-amino-3-oxo-4-(phosphooxy)butyric acid which spontaneously decarboxylates to form 3-amino-2-oxopropyl phosphate (AHAP). The sequence is that of 4-hydroxythreonine-4-phosphate dehydrogenase from Sulfurihydrogenibium sp. (strain YO3AOP1).